The sequence spans 1462 residues: uncharacterized protein (1462 aa).

A helical transmembrane segment spans residues Thr-119–Ile-139. 2 positions are modified to phosphoserine: Ser-411 and Ser-420. Residues Thr-541–Asn-730 form the SEC7 domain. The stretch at Glu-1102–Tyr-1139 is one HEAT repeat.

It localises to the cytoplasm. It is found in the golgi apparatus membrane. This is an uncharacterized protein from Schizosaccharomyces pombe (strain 972 / ATCC 24843) (Fission yeast).